The primary structure comprises 230 residues: 2,3-bisphosphoglycerate-dependent phosphoglycerate mutase (230 aa).

Substrate-binding positions include 8–15, 21–22, R60, 87–90, K98, 114–115, and 183–184; these read RHGESEWN, TG, ERHY, RR, and GN. Residue H9 is the Tele-phosphohistidine intermediate of the active site. The Proton donor/acceptor role is filled by E87.

It belongs to the phosphoglycerate mutase family. BPG-dependent PGAM subfamily.

It carries out the reaction (2R)-2-phosphoglycerate = (2R)-3-phosphoglycerate. The protein operates within carbohydrate degradation; glycolysis; pyruvate from D-glyceraldehyde 3-phosphate: step 3/5. Its function is as follows. Catalyzes the interconversion of 2-phosphoglycerate and 3-phosphoglycerate. This is 2,3-bisphosphoglycerate-dependent phosphoglycerate mutase from Streptococcus pneumoniae (strain P1031).